The primary structure comprises 464 residues: Adenylyltransferase and sulfurtransferase MOCS3 (464 aa).

ATP contacts are provided by residues Gly101, Asp122, 129–133, Lys146, and 190–191; these read NNMHR and DN. Zn(2+)-binding residues include Cys231 and Cys234. The Glycyl thioester intermediate; for adenylyltransferase activity role is filled by Cys248. Zn(2+) is bound by residues Cys306 and Cys309. Residues 358–462 enclose the Rhodanese domain; it reads KKEQHVLLDV…WAANVNPNFP (105 aa). Catalysis depends on Cys422, which acts as the Cysteine persulfide intermediate; for sulfurtransferase activity.

It in the N-terminal section; belongs to the HesA/MoeB/ThiF family. UBA4 subfamily. It depends on Zn(2+) as a cofactor.

Its subcellular location is the cytoplasm. The enzyme catalyses [molybdopterin-synthase sulfur-carrier protein]-C-terminal Gly-Gly + ATP + H(+) = [molybdopterin-synthase sulfur-carrier protein]-C-terminal Gly-Gly-AMP + diphosphate. The catalysed reaction is [molybdopterin-synthase sulfur-carrier protein]-C-terminal Gly-Gly-AMP + S-sulfanyl-L-cysteinyl-[cysteine desulfurase] + AH2 = [molybdopterin-synthase sulfur-carrier protein]-C-terminal-Gly-aminoethanethioate + L-cysteinyl-[cysteine desulfurase] + A + AMP + 2 H(+). Its pathway is tRNA modification; 5-methoxycarbonylmethyl-2-thiouridine-tRNA biosynthesis. It participates in cofactor biosynthesis; molybdopterin biosynthesis. In terms of biological role, plays a central role in 2-thiolation of mcm(5)S(2)U at tRNA wobble positions of cytosolic tRNA(Lys), tRNA(Glu) and tRNA(Gln). Also essential during biosynthesis of the molybdenum cofactor. Acts by mediating the C-terminal thiocarboxylation of sulfur carriers URM1 and MOCS2A. Its N-terminus first activates URM1 and MOCS2A as acyl-adenylates (-COAMP), then the persulfide sulfur on the catalytic cysteine is transferred to URM1 and MOCS2A to form thiocarboxylation (-COSH) of their C-terminus. The reaction probably involves hydrogen sulfide that is generated from the persulfide intermediate and that acts as a nucleophile towards URM1 and MOCS2A. Subsequently, a transient disulfide bond is formed. Does not use thiosulfate as sulfur donor; NFS1 probably acting as a sulfur donor for thiocarboxylation reactions. The polypeptide is Adenylyltransferase and sulfurtransferase MOCS3 (Arabidopsis thaliana (Mouse-ear cress)).